The primary structure comprises 326 residues: Ras association domain-containing protein 2 (326 aa).

The tract at residues 111–133 is disordered; it reads EVDAPPEGDQMPSSTDSRGLKPL. Residues 176-264 enclose the Ras-associating domain; sequence YNHKTSVFTP…SKVFLMEKDQ (89 aa). Positions 272–319 constitute an SARAH domain; it reads VAQYIKFEMPVLKSFIQKLQEEEDREVKKLMRKYTVLRLMIRQRLEEI.

In terms of assembly, interacts directly with activated KRAS in a GTP-dependent manner. Interacts (via SARAH domain) with STK3/MST2 and STK4/MST1. Post-translationally, phosphorylated by STK3/MST2 and STK4/MST1. As to expression, widely expressed with highest levels in brain, placenta, peripheral blood and lung. Frequently down-regulated in lung tumor cell lines.

Its subcellular location is the nucleus. The protein resides in the cytoplasm. The protein localises to the chromosome. It localises to the centromere. It is found in the kinetochore. In terms of biological role, potential tumor suppressor. Acts as a KRAS-specific effector protein. May promote apoptosis and cell cycle arrest. Stabilizes STK3/MST2 by protecting it from proteasomal degradation. The protein is Ras association domain-containing protein 2 (RASSF2) of Homo sapiens (Human).